Consider the following 133-residue polypeptide: Large ribosomal subunit protein bL12 (133 aa).

It belongs to the bacterial ribosomal protein bL12 family. Homodimer. Part of the ribosomal stalk of the 50S ribosomal subunit. Forms a multimeric L10(L12)X complex, where L10 forms an elongated spine to which 2 to 4 L12 dimers bind in a sequential fashion. Binds GTP-bound translation factors.

Functionally, forms part of the ribosomal stalk which helps the ribosome interact with GTP-bound translation factors. Is thus essential for accurate translation. This is Large ribosomal subunit protein bL12 from Trichodesmium erythraeum (strain IMS101).